The following is a 577-amino-acid chain: Pyruvate decarboxylase (577 aa).

Residues Asp30 and His116 each contribute to the substrate site. A thiamine pyrophosphate binding region spans residues 388-482; that stretch reads TPGYGVNDFI…FLINNDGYTI (95 aa). Residues Asp450, Asn477, and Gly479 each coordinate Mg(2+). Glu483 lines the substrate pocket.

This sequence belongs to the TPP enzyme family. Homotetramer. Requires a metal cation as cofactor. The cofactor is thiamine diphosphate.

It catalyses the reaction a 2-oxocarboxylate + H(+) = an aldehyde + CO2. This Aspergillus parasiticus protein is Pyruvate decarboxylase (pdcA).